The primary structure comprises 363 residues: MNYEFEREIGFINSQPSLAECLTSFPPVGDTFQSSSIKNSTLSHSTVIPPPFEQTIPSLNPSSHPRQSRPKQSPNGTSPLPAATLPPEYPWMKEKKNSKKNHLPASSGPAASCLSQKETHEIPDNTGGGSRRLRTAYTNTQLLELEKEFHFNKYLCRPRRVEIAALLDLTERQVKVWFQNRRMKHKRQTQCKENQNGDGKFKNLEDSGQTEDDEEKSLFEQGINNVTGALLDREGYTFQSNALTQQQAQNLHNGESQSFPVSPLPSNEKNLKHFHQQSPTVQNCLSTMAQNCAAGLNNDSPEALDVPSLQDFNVFSTESCLQLSDGVSPSLPGSLDSPVDLSADSFDFFTDTLTTIDLQHLNY.

Disordered regions lie at residues 23 to 133 (TSFP…SRRL) and 183 to 216 (MKHKRQTQCKENQNGDGKFKNLEDSGQTEDDEEK). Composition is skewed to polar residues over residues 31-46 (TFQSSSIKNSTLSHST) and 55-78 (TIPSLNPSSHPRQSRPKQSPNGTS). The short motif at 88 to 93 (EYPWMK) is the Antp-type hexapeptide element. Positions 130–189 (SRRLRTAYTNTQLLELEKEFHFNKYLCRPRRVEIAALLDLTERQVKVWFQNRRMKHKRQT) form a DNA-binding region, homeobox.

This sequence belongs to the Antp homeobox family. Proboscipedia subfamily.

The protein resides in the nucleus. Functionally, sequence-specific transcription factor which is part of a developmental regulatory system that provides cells with specific positional identities on the anterior-posterior axis. The chain is Homeobox protein Hox-A2 (HOXA2) from Heterodontus francisci (Horn shark).